The following is a 278-amino-acid chain: Small ribosomal subunit protein uS2 (278 aa).

Residues 235–278 (AEAAEEAPKRERKAKAAVKKERTKKEDDDALNANVAGKFAKDEE) form a disordered region. The segment covering 252-261 (VKKERTKKED) has biased composition (basic and acidic residues).

This sequence belongs to the universal ribosomal protein uS2 family.

The chain is Small ribosomal subunit protein uS2 from Parabacteroides distasonis (strain ATCC 8503 / DSM 20701 / CIP 104284 / JCM 5825 / NCTC 11152).